A 519-amino-acid polypeptide reads, in one-letter code: Dolichol kinase (519 aa).

Residues 1-47 (MVAIIPHASFTTIKLTQKTEGSQMPTEEICKINMRTRKFDVGGNSRD) lie on the Cytoplasmic side of the membrane. A helical membrane pass occupies residues 48–68 (FECFYSNFVQTVILLGTFFYC). Over 69 to 88 (VERLQPWSIVTADISYKQIF) the chain is Lumenal. The helical transmembrane segment at 89–109 (VNVFVVCLIMVGLIFTKYWQH) threads the bilayer. The Cytoplasmic portion of the chain corresponds to 110–118 (GYKSLPKFD). Residues 119 to 139 (TIYSLYLPFMVSLLFDTSSTV) traverse the membrane as a helical segment. At 140-151 (INTILILSVLNS) the chain is on the lumenal side. The chain crosses the membrane as a helical span at residues 152-172 (YRWRTQLVVIILQLCLIFFNF). The Cytoplasmic segment spans residues 173–181 (EAGDRLKNI). A helical membrane pass occupies residues 182–203 (ISIVINSLLSLILKYIGQLKSL). Residues 204-223 (DNIDSNLFSILLTNILYVSE) lie on the Lumenal side of the membrane. The chain crosses the membrane as a helical span at residues 224–244 (AGTVHFRILKGIILALTTIIS). Over 245–253 (INYVLKKVM) the chain is Cytoplasmic. The chain crosses the membrane as a helical span at residues 254 to 274 (HFKPFMLSISFAIGLPLFANT). Residues 275–294 (FIHLEDGENPLLWLVKYILE) lie on the Lumenal side of the membrane. A helical transmembrane segment spans residues 295 to 315 (STIRQKILFAWSSILILSIPS). Residues 316-326 (ILIEKDSLSLN) lie on the Cytoplasmic side of the membrane. Residues 327 to 347 (TSRKLWHFIIFLLIIPSFQMD) form a helical membrane-spanning segment. Topologically, residues 348-349 (SN) are lumenal. The helical transmembrane segment at 350–370 (FVKIALSGTIPVFLSIEYIRF) threads the bilayer. The Cytoplasmic portion of the chain corresponds to 371–394 (QNLPPLGSAIELQLRRFADDRDHS). Residues 395 to 415 (GPLIISYLYLLFGISTPLLMN) form a helical membrane-spanning segment. Residues 416-417 (NS) are Lumenal-facing. Residues 418–438 (PMGLIGLGIGDSLASIIGKRY) traverse the membrane as a helical segment. At 439–449 (GRIRWKGTQKT) the chain is on the cytoplasmic side. The chain crosses the membrane as a helical span at residues 450-470 (LEGTLAFIVTSFIVCLVLLRF). At 471 to 472 (DK) the chain is on the lumenal side. The helical transmembrane segment at 473-493 (AAIFNHLTTLQLLTLCTLSGV) threads the bilayer. Over 494–519 (LEGNSVLNDNILIPAFMMICEKLITL) the chain is Cytoplasmic.

The protein belongs to the polyprenol kinase family.

Its subcellular location is the endoplasmic reticulum membrane. The catalysed reaction is a di-trans,poly-cis-dolichol + CTP = a di-trans,poly-cis-dolichyl phosphate + CDP + H(+). It functions in the pathway protein modification; protein glycosylation. Catalyzes CTP-mediated phosphorylation of dolichol, the terminal step in de novo dolichyl monophosphate (Dol-P) biosynthesis. Dol-P is a lipid carrier essential for the synthesis of N-linked and O-linked oligosaccharides and for GPI anchors. In Saccharomyces cerevisiae (strain ATCC 204508 / S288c) (Baker's yeast), this protein is Dolichol kinase (SEC59).